Reading from the N-terminus, the 155-residue chain is Small ribosomal subunit protein uS7 (155 aa).

It belongs to the universal ribosomal protein uS7 family. As to quaternary structure, part of the 30S ribosomal subunit. Contacts proteins S9 and S11.

In terms of biological role, one of the primary rRNA binding proteins, it binds directly to 16S rRNA where it nucleates assembly of the head domain of the 30S subunit. Is located at the subunit interface close to the decoding center, probably blocks exit of the E-site tRNA. This is Small ribosomal subunit protein uS7 from Thioalkalivibrio sulfidiphilus (strain HL-EbGR7).